Here is a 373-residue protein sequence, read N- to C-terminus: NADPH-dependent 3-keto-steroid reductase HSD3B3 (373 aa).

Residues 10-15 (GAGGFL), Tyr-155, and Lys-159 contribute to the NADP(+) site. Lys-159 acts as the Proton donor in catalysis. Residues 288–308 (VALLYWFGFLLETVSFLLRPV) traverse the membrane as a helical segment.

It belongs to the 3-beta-HSD family. As to expression, high levels in adrenal gland, kidney and male liver (at protein level). Low levels in female liver (at protein level). Expressed in ovaries (at protein level).

The protein resides in the endoplasmic reticulum membrane. It is found in the mitochondrion membrane. It carries out the reaction a 3beta-hydroxysteroid + NADP(+) = a 3-oxosteroid + NADPH + H(+). It catalyses the reaction 5alpha-androstane-3beta,17beta-diol + NADP(+) = 17beta-hydroxy-5alpha-androstan-3-one + NADPH + H(+). It functions in the pathway steroid metabolism. Responsible for the reduction of the oxo group on the C-3 of 5alpha-androstane steroids. Catalyzes the conversion of dihydrotestosterone to its inactive form 5alpha-androstanediol, that does not bind androgen receptor/AR. Does not function as an isomerase. The polypeptide is NADPH-dependent 3-keto-steroid reductase HSD3B3 (HSD3B3) (Mesocricetus auratus (Golden hamster)).